The sequence spans 1058 residues: Carbamoyl phosphate synthase pyrimidine-specific large chain (1058 aa).

The tract at residues 1 to 401 (MPKRTDIHKI…ATLKAVRSLE (401 aa)) is carboxyphosphate synthetic domain. ATP is bound by residues arginine 129, arginine 169, glycine 175, glycine 176, glutamine 208, isoleucine 210, glutamate 215, glycine 241, isoleucine 242, histidine 243, glutamine 284, and glutamate 298. The 195-residue stretch at 133 to 327 (KALMEELGEP…IAKMAAKIAV (195 aa)) folds into the ATP-grasp 1 domain. 3 residues coordinate Mg(2+): glutamine 284, glutamate 298, and asparagine 300. Mn(2+)-binding residues include glutamine 284, glutamate 298, and asparagine 300. The oligomerization domain stretch occupies residues 402-546 (IGVHHVEEPA…YGTYEFENES (145 aa)). Residues 547-929 (IVTKRPSVLV…ALYKAFEAAK (383 aa)) form a carbamoyl phosphate synthetic domain region. The 191-residue stretch at 671–861 (DKVIKALAIP…MAQVATRAIL (191 aa)) folds into the ATP-grasp 2 domain. The ATP site is built by arginine 707, serine 746, leucine 748, glutamate 752, glycine 777, valine 778, histidine 779, serine 780, glutamine 820, and glutamate 832. Residues glutamine 820, glutamate 832, and asparagine 834 each coordinate Mg(2+). Mn(2+)-binding residues include glutamine 820, glutamate 832, and asparagine 834. The region spanning 930–1058 (LHVPSHGNVL…ESQSFVTQAL (129 aa)) is the MGS-like domain. Positions 930-1058 (LHVPSHGNVL…ESQSFVTQAL (129 aa)) are allosteric domain.

This sequence belongs to the CarB family. In terms of assembly, composed of two chains; the small (or glutamine) chain promotes the hydrolysis of glutamine to ammonia, which is used by the large (or ammonia) chain to synthesize carbamoyl phosphate. Tetramer of heterodimers (alpha,beta)4. Mg(2+) serves as cofactor. It depends on Mn(2+) as a cofactor.

The catalysed reaction is hydrogencarbonate + L-glutamine + 2 ATP + H2O = carbamoyl phosphate + L-glutamate + 2 ADP + phosphate + 2 H(+). The enzyme catalyses hydrogencarbonate + NH4(+) + 2 ATP = carbamoyl phosphate + 2 ADP + phosphate + 2 H(+). The protein operates within amino-acid biosynthesis; L-arginine biosynthesis; carbamoyl phosphate from bicarbonate: step 1/1. Its pathway is pyrimidine metabolism; UMP biosynthesis via de novo pathway; (S)-dihydroorotate from bicarbonate: step 1/3. In terms of biological role, small subunit of the glutamine-dependent carbamoyl phosphate synthetase (CPSase). CPSase catalyzes the formation of carbamoyl phosphate from the ammonia moiety of glutamine, carbonate, and phosphate donated by ATP, constituting the first step of the biosynthetic pathway leading to pyrimidine nucleotides. The large subunit (synthetase) binds the substrates ammonia (free or transferred from glutamine from the small subunit), hydrogencarbonate and ATP and carries out an ATP-coupled ligase reaction, activating hydrogencarbonate by forming carboxy phosphate which reacts with ammonia to form carbamoyl phosphate. The sequence is that of Carbamoyl phosphate synthase pyrimidine-specific large chain (pyrAB) from Lactiplantibacillus plantarum (strain ATCC BAA-793 / NCIMB 8826 / WCFS1) (Lactobacillus plantarum).